The following is a 373-amino-acid chain: Probable neutral protease 2 homolog MCYG_05201 (373 aa).

A signal peptide spans 1–19 (MQFFTALAAVGALVAPALA). The propeptide occupies 20-187 (LPTQVPANQS…AHIVGTIDKR (168 aa)). 2 disulfide bridges follow: C195-C265 and C272-C290. A Zn(2+)-binding site is contributed by H314. E315 is an active-site residue. Zn(2+)-binding residues include H318 and D329.

The protein belongs to the peptidase M35 family. Zn(2+) is required as a cofactor.

It localises to the secreted. The enzyme catalyses Preferential cleavage of bonds with hydrophobic residues in P1'. Also 3-Asn-|-Gln-4 and 8-Gly-|-Ser-9 bonds in insulin B chain.. In terms of biological role, probable secreted metalloprotease that shows high activities on basic nuclear substrates such as histone and protamine. May be involved in virulence. The polypeptide is Probable neutral protease 2 homolog MCYG_05201 (Arthroderma otae (strain ATCC MYA-4605 / CBS 113480) (Microsporum canis)).